Here is a 281-residue protein sequence, read N- to C-terminus: Bifunctional protein FolD (281 aa).

Residues Gly-165–Gly-167, Thr-192, and Val-233 each bind NADP(+).

Belongs to the tetrahydrofolate dehydrogenase/cyclohydrolase family. Homodimer.

The catalysed reaction is (6R)-5,10-methylene-5,6,7,8-tetrahydrofolate + NADP(+) = (6R)-5,10-methenyltetrahydrofolate + NADPH. It catalyses the reaction (6R)-5,10-methenyltetrahydrofolate + H2O = (6R)-10-formyltetrahydrofolate + H(+). It participates in one-carbon metabolism; tetrahydrofolate interconversion. Catalyzes the oxidation of 5,10-methylenetetrahydrofolate to 5,10-methenyltetrahydrofolate and then the hydrolysis of 5,10-methenyltetrahydrofolate to 10-formyltetrahydrofolate. This chain is Bifunctional protein FolD, found in Mycobacterium ulcerans (strain Agy99).